The chain runs to 206 residues: Large ribosomal subunit protein uL4 (206 aa).

The disordered stretch occupies residues 46-77 (GTRAQKDREQVKHSTKKPFKQKGTGRARAGMT). The segment covering 58–70 (HSTKKPFKQKGTG) has biased composition (basic residues).

Belongs to the universal ribosomal protein uL4 family. Part of the 50S ribosomal subunit.

Its function is as follows. One of the primary rRNA binding proteins, this protein initially binds near the 5'-end of the 23S rRNA. It is important during the early stages of 50S assembly. It makes multiple contacts with different domains of the 23S rRNA in the assembled 50S subunit and ribosome. Functionally, forms part of the polypeptide exit tunnel. The sequence is that of Large ribosomal subunit protein uL4 from Albidiferax ferrireducens (strain ATCC BAA-621 / DSM 15236 / T118) (Rhodoferax ferrireducens).